Here is a 150-residue protein sequence, read N- to C-terminus: Anthrone oxygenase gedH (150 aa).

A run of 4 helical transmembrane segments spans residues 1-21 (MANP…PVFL), 41-61 (GHKL…WVAA), 73-93 (PVLA…CMVS), and 128-148 (LFPL…LVGG).

It belongs to the anthrone oxygenase family.

It is found in the membrane. It catalyses the reaction emodin anthrone + O2 = emodin + H2O + H(+). It participates in secondary metabolite biosynthesis. Its function is as follows. Anthrone oxygenase; part of the gene cluster that mediates the biosynthesis of geodin, an intermediate in the biosynthesis of other natural products. The pathway begins with the synthesis of atrochrysone thioester by the polyketide synthase (PKS) gedC. The atrochrysone carboxyl ACP thioesterase gedB then breaks the thioester bond and releases the atrochrysone carboxylic acid from gedC. The atrochrysone carboxylic acid is then converted to atrochrysone which is further transformed into emodin anthrone. The next step is performed by the emodin anthrone oxygenase gedH that catalyzes the oxidation of emodinanthrone to emodin. Emodin O-methyltransferase encoded probably by gedA then catalyzes methylation of the 8-hydroxy group of emodin to form questin. Ring cleavage of questin by questin oxidase gedK leads to desmethylsulochrin via several intermediates including questin epoxide. Another methylation step probably catalyzed by methyltransferase gedG leads to the formation of sulochrin which is further converted to dihydrogeodin by the sulochrin halogenase gedL. Finally, the dihydrogeodin oxidase gedJ catalyzes the stereospecific phenol oxidative coupling reaction converting dihydrogeodin to geodin. In Aspergillus terreus (strain NIH 2624 / FGSC A1156), this protein is Anthrone oxygenase gedH.